Reading from the N-terminus, the 645-residue chain is MSDTKVYPVPDYIREKAHITKDTYEEMYRRSLDDPEGFWGEQAEKFLDWFSKWDKVYHSDLKNGEIRFFEGGKLNVAHNCLDRHLEQRGDQTAIIWEGDDPNNSEHITYKDLHERVCRLANAMKARGVKKGDRVCIYLPMIPEAAVAMLACARIGAIHSIVFGGFSPDALKDRIQNADCETVITADEGVRGGRNVALKSNADKALESCPDVKNVFVVKRTGGDIDWKEGRDIWYHEAVADVSADCPAEELDAEDPLFILYTSGSTGKPKGVQHCSAGYLLGAAMTHKYVFDYQEGEVYWCTADVGWVTGHSYIVYGPLANGATTLMFEGVPTYPSAARCWEVVDKHNVSIFYTAPTAIRALMGQGNEHVTKTSRKSLRILGTVGEPINPEAWEWYYNVVGDGRCPIVDTWWQTETGSILIAPLPGATDLKPGSATLPFFGVEPALVDPEGKELEGAASGNLVIKRAWPSMMRTVYGDHKRFMETYLAAYPGMYFTGDGARRDEDGYYWITGRVDDVINVSGHRMGTAEVESALVLHDAVAEAAVVGYPHDIKGQGIYAYVTLMAGVEPSDELKKELVKLVSNEIGPIAKPDVIQWAPGLPKTRSGKIMRRILRKVAANELDSLGDTSTLADPTVVDNLIEDRPNK.

Residues 190–193 (RGGR) and Thr308 contribute to the CoA site. Residues 384 to 386 (GEP), 408 to 413 (DTWWQT), Asp497, and Arg512 each bind ATP. Ser520 serves as a coordination point for CoA. Arg523 provides a ligand contact to ATP. Mg(2+) contacts are provided by Val534, His536, and Val539. Lys606 carries the N6-acetyllysine modification.

The protein belongs to the ATP-dependent AMP-binding enzyme family. Requires Mg(2+) as cofactor. Acetylated. Deacetylation by the SIR2-homolog deacetylase activates the enzyme.

It catalyses the reaction acetate + ATP + CoA = acetyl-CoA + AMP + diphosphate. In terms of biological role, catalyzes the conversion of acetate into acetyl-CoA (AcCoA), an essential intermediate at the junction of anabolic and catabolic pathways. AcsA undergoes a two-step reaction. In the first half reaction, AcsA combines acetate with ATP to form acetyl-adenylate (AcAMP) intermediate. In the second half reaction, it can then transfer the acetyl group from AcAMP to the sulfhydryl group of CoA, forming the product AcCoA. The polypeptide is Acetyl-coenzyme A synthetase (Alkalilimnicola ehrlichii (strain ATCC BAA-1101 / DSM 17681 / MLHE-1)).